The sequence spans 270 residues: Bis(5'-nucleosyl)-tetraphosphatase, symmetrical (270 aa).

It belongs to the Ap4A hydrolase family.

It carries out the reaction P(1),P(4)-bis(5'-adenosyl) tetraphosphate + H2O = 2 ADP + 2 H(+). In terms of biological role, hydrolyzes diadenosine 5',5'''-P1,P4-tetraphosphate to yield ADP. This chain is Bis(5'-nucleosyl)-tetraphosphatase, symmetrical, found in Thioalkalivibrio sulfidiphilus (strain HL-EbGR7).